The primary structure comprises 261 residues: 5'-nucleotidase SurE (261 aa).

The a divalent metal cation site is built by D10, D11, S41, and N96.

Belongs to the SurE nucleotidase family. It depends on a divalent metal cation as a cofactor.

Its subcellular location is the cytoplasm. It carries out the reaction a ribonucleoside 5'-phosphate + H2O = a ribonucleoside + phosphate. Nucleotidase that shows phosphatase activity on nucleoside 5'-monophosphates. The sequence is that of 5'-nucleotidase SurE from Methanococcoides burtonii (strain DSM 6242 / NBRC 107633 / OCM 468 / ACE-M).